A 65-amino-acid polypeptide reads, in one-letter code: Small ribosomal subunit protein bS21 (65 aa).

The tract at residues 39–65 is disordered; that stretch reads EKPSIKRKKKAIAARKRALKKQRKMMD. Basic residues predominate over residues 43–65; sequence IKRKKKAIAARKRALKKQRKMMD.

Belongs to the bacterial ribosomal protein bS21 family.

The sequence is that of Small ribosomal subunit protein bS21 from Pelobacter propionicus (strain DSM 2379 / NBRC 103807 / OttBd1).